Consider the following 279-residue polypeptide: Shikimate dehydrogenase (NADP(+)) (279 aa).

Residues Ser20 to Ser22 and Thr67 contribute to the shikimate site. Residue Lys71 is the Proton acceptor of the active site. Asp83 serves as a coordination point for NADP(+). Shikimate contacts are provided by Asn92 and Asp108. Residues Gly134–Ala138 and Leu223 each bind NADP(+). Tyr225 serves as a coordination point for shikimate. Gly246 contributes to the NADP(+) binding site.

This sequence belongs to the shikimate dehydrogenase family. Homodimer.

The enzyme catalyses shikimate + NADP(+) = 3-dehydroshikimate + NADPH + H(+). Its pathway is metabolic intermediate biosynthesis; chorismate biosynthesis; chorismate from D-erythrose 4-phosphate and phosphoenolpyruvate: step 4/7. Functionally, involved in the biosynthesis of the chorismate, which leads to the biosynthesis of aromatic amino acids. Catalyzes the reversible NADPH linked reduction of 3-dehydroshikimate (DHSA) to yield shikimate (SA). This Cereibacter sphaeroides (strain ATCC 17023 / DSM 158 / JCM 6121 / CCUG 31486 / LMG 2827 / NBRC 12203 / NCIMB 8253 / ATH 2.4.1.) (Rhodobacter sphaeroides) protein is Shikimate dehydrogenase (NADP(+)).